A 453-amino-acid polypeptide reads, in one-letter code: MPHWAAVIMAAGKGTRMKSKLPKVMHTLAGKPMLQHVLDCVRSVEIPRSMVVLGHGREQIEATLDDRTEVVVQEEQCGTGHAIMQAIPHCHEVDHIIVLSGDQPLIRPETLRNLVRIHIEHNAAATLLTACFENPHGLGRILKEGDQFLRVVEEKDATPEERLIQEINTGTYCFNVAKLREALKNITPKNAQGEYYLTDVFAVFHAQGEVIRTYCTEDVHEALGINSRAQLAAAEDVARQRILSYWMEEGVTIIDPRSTFIEAGVVLQPDVVLQPFTILKGRTQVAEDAVIGPHTTLTDCTVGAGSEVSHTVGNQAVIGGHCTIGPYAYLRPGTVLQDKVKVGDFVEIKNSQIGEGSKIPHLSYVGDSQVGKSVNIGAGTITCNYDGVNKYKTIIRDKAFLGSNTNLVAPVEIGEGSVTGAGSTISKNVPANTLAIERSTQKHIENWVRNKKK.

Residues 1 to 228 (MPHWAAVIMA…VHEALGINSR (228 aa)) form a pyrophosphorylase region. Residues Lys23, Gln73, 78-79 (GT), 100-102 (SGD), Gly139, Glu153, Asn168, and Asn226 each bind UDP-N-acetyl-alpha-D-glucosamine. Asp102 contributes to the Mg(2+) binding site. Residue Asn226 participates in Mg(2+) binding. Residues 229-249 (AQLAAAEDVARQRILSYWMEE) are linker. Residues 250–453 (GVTIIDPRST…IENWVRNKKK (204 aa)) are N-acetyltransferase. UDP-N-acetyl-alpha-D-glucosamine contacts are provided by Arg331 and Lys349. His361 functions as the Proton acceptor in the catalytic mechanism. Tyr364 and Asn375 together coordinate UDP-N-acetyl-alpha-D-glucosamine. Residues Ala378, 384 to 385 (NY), Ser403, Ala421, and Arg438 each bind acetyl-CoA.

It in the N-terminal section; belongs to the N-acetylglucosamine-1-phosphate uridyltransferase family. In the C-terminal section; belongs to the transferase hexapeptide repeat family. In terms of assembly, homotrimer. Mg(2+) serves as cofactor.

It localises to the cytoplasm. It carries out the reaction alpha-D-glucosamine 1-phosphate + acetyl-CoA = N-acetyl-alpha-D-glucosamine 1-phosphate + CoA + H(+). The catalysed reaction is N-acetyl-alpha-D-glucosamine 1-phosphate + UTP + H(+) = UDP-N-acetyl-alpha-D-glucosamine + diphosphate. The protein operates within nucleotide-sugar biosynthesis; UDP-N-acetyl-alpha-D-glucosamine biosynthesis; N-acetyl-alpha-D-glucosamine 1-phosphate from alpha-D-glucosamine 6-phosphate (route II): step 2/2. Its pathway is nucleotide-sugar biosynthesis; UDP-N-acetyl-alpha-D-glucosamine biosynthesis; UDP-N-acetyl-alpha-D-glucosamine from N-acetyl-alpha-D-glucosamine 1-phosphate: step 1/1. It functions in the pathway bacterial outer membrane biogenesis; LPS lipid A biosynthesis. Its function is as follows. Catalyzes the last two sequential reactions in the de novo biosynthetic pathway for UDP-N-acetylglucosamine (UDP-GlcNAc). The C-terminal domain catalyzes the transfer of acetyl group from acetyl coenzyme A to glucosamine-1-phosphate (GlcN-1-P) to produce N-acetylglucosamine-1-phosphate (GlcNAc-1-P), which is converted into UDP-GlcNAc by the transfer of uridine 5-monophosphate (from uridine 5-triphosphate), a reaction catalyzed by the N-terminal domain. This is Bifunctional protein GlmU from Desulfitobacterium hafniense (strain DSM 10664 / DCB-2).